Here is a 396-residue protein sequence, read N- to C-terminus: Putative glycosyltransferase HOC1 (396 aa).

Residues 2–13 lie on the Cytoplasmic side of the membrane; that stretch reads AKTTKRASSFRR. The chain crosses the membrane as a helical; Signal-anchor for type II membrane protein span at residues 14–34; that stretch reads LMIFAIIALISLAFGVRYLFH. The Lumenal segment spans residues 35 to 396; sequence NSNATDLQKI…WKNTPKVEQK (362 aa). N-linked (GlcNAc...) asparagine glycosylation occurs at asparagine 37.

The protein belongs to the glycosyltransferase 32 family. As to quaternary structure, component of the M-Pol II complex composed of ANP1, MNN9, MNN10, MNN11 and HOC1.

It is found in the golgi apparatus. The protein resides in the cis-Golgi network membrane. Its function is as follows. The M-Pol II complex possesses alpha-1,6-mannosyltransferase activity and is probably involved in the elongation of the mannan backbone of N-linked glycans on cell wall and periplasmic proteins. The protein is Putative glycosyltransferase HOC1 (HOC1) of Saccharomyces cerevisiae (strain ATCC 204508 / S288c) (Baker's yeast).